The primary structure comprises 476 residues: Methylenetetrahydrofolate--tRNA-(uracil-5-)-methyltransferase TrmFO (476 aa).

14–19 is a binding site for FAD; the sequence is GGGLAG.

Belongs to the MnmG family. TrmFO subfamily. It depends on FAD as a cofactor.

It localises to the cytoplasm. It catalyses the reaction uridine(54) in tRNA + (6R)-5,10-methylene-5,6,7,8-tetrahydrofolate + NADH + H(+) = 5-methyluridine(54) in tRNA + (6S)-5,6,7,8-tetrahydrofolate + NAD(+). The catalysed reaction is uridine(54) in tRNA + (6R)-5,10-methylene-5,6,7,8-tetrahydrofolate + NADPH + H(+) = 5-methyluridine(54) in tRNA + (6S)-5,6,7,8-tetrahydrofolate + NADP(+). Functionally, catalyzes the folate-dependent formation of 5-methyl-uridine at position 54 (M-5-U54) in all tRNAs. This chain is Methylenetetrahydrofolate--tRNA-(uracil-5-)-methyltransferase TrmFO, found in Brucella anthropi (strain ATCC 49188 / DSM 6882 / CCUG 24695 / JCM 21032 / LMG 3331 / NBRC 15819 / NCTC 12168 / Alc 37) (Ochrobactrum anthropi).